The chain runs to 98 residues: uncharacterized protein (98 aa).

Positions 19 to 31 are enriched in basic residues; sequence RRMSKRSKNKAKK. A disordered region spans residues 19 to 47; it reads RRMSKRSKNKAKKERVPVEDRPPTPMPTS.

This sequence belongs to the lymphocryptovirus BNLF2b family.

This is an uncharacterized protein from Homo sapiens (Human).